We begin with the raw amino-acid sequence, 156 residues long: 6,7-dimethyl-8-ribityllumazine synthase (156 aa).

5-amino-6-(D-ribitylamino)uracil contacts are provided by residues Phe-22, 57–59 (AVE), and 81–83 (SVI). 86–87 (GT) is a (2S)-2-hydroxy-3-oxobutyl phosphate binding site. Catalysis depends on His-89, which acts as the Proton donor. Phe-114 serves as a coordination point for 5-amino-6-(D-ribitylamino)uracil. Residue Arg-128 participates in (2S)-2-hydroxy-3-oxobutyl phosphate binding.

This sequence belongs to the DMRL synthase family. In terms of assembly, forms an icosahedral capsid composed of 60 subunits, arranged as a dodecamer of pentamers.

It carries out the reaction (2S)-2-hydroxy-3-oxobutyl phosphate + 5-amino-6-(D-ribitylamino)uracil = 6,7-dimethyl-8-(1-D-ribityl)lumazine + phosphate + 2 H2O + H(+). It participates in cofactor biosynthesis; riboflavin biosynthesis; riboflavin from 2-hydroxy-3-oxobutyl phosphate and 5-amino-6-(D-ribitylamino)uracil: step 1/2. In terms of biological role, catalyzes the formation of 6,7-dimethyl-8-ribityllumazine by condensation of 5-amino-6-(D-ribitylamino)uracil with 3,4-dihydroxy-2-butanone 4-phosphate. This is the penultimate step in the biosynthesis of riboflavin. This chain is 6,7-dimethyl-8-ribityllumazine synthase, found in Vibrio vulnificus (strain CMCP6).